We begin with the raw amino-acid sequence, 181 residues long: Oligoribonuclease (181 aa).

Residues 8 to 171 form the Exonuclease domain; that stretch reads LIWLDMEMTG…ADILESIEEM (164 aa). Y129 is an active-site residue.

It belongs to the oligoribonuclease family.

Its subcellular location is the cytoplasm. 3'-to-5' exoribonuclease specific for small oligoribonucleotides. In Chromobacterium violaceum (strain ATCC 12472 / DSM 30191 / JCM 1249 / CCUG 213 / NBRC 12614 / NCIMB 9131 / NCTC 9757 / MK), this protein is Oligoribonuclease.